The following is a 520-amino-acid chain: Maturase K (520 aa).

It belongs to the intron maturase 2 family. MatK subfamily.

It localises to the plastid. The protein localises to the chloroplast. Usually encoded in the trnK tRNA gene intron. Probably assists in splicing its own and other chloroplast group II introns. The sequence is that of Maturase K from Aspidistra elatior (Cast-iron plant).